The sequence spans 80 residues: Raniseptin-4 (80 aa).

A signal peptide spans 1 to 22 (MAFLKKSLFLVLFLGIVSLSIC). The propeptide occupies 23–49 (EEEKREGEEEEKQEEENEELSEEELRD).

It belongs to the frog skin active peptide (FSAP) family. Dermaseptin subfamily. As to expression, expressed by the skin glands.

It is found in the secreted. Its function is as follows. Has antibacterial activity. This Boana raniceps (Chaco tree frog) protein is Raniseptin-4.